The sequence spans 461 residues: Armadillo repeat-containing X-linked protein 1 (461 aa).

Residues 1 to 6 lie on the Mitochondrial intermembrane side of the membrane; that stretch reads MGRTRE. Mitochondrion outer membrane (MOM)-targeting sequence stretches follow at residues 1-6 and 26-36; these read MGRTRE and RLTWGKDENEK. Residues 7-29 form a helical; Signal-anchor membrane-spanning segment; sequence AGCVAAGMVIGAGACYCVYRLTW. At 30 to 461 the chain is on the cytoplasmic side; that stretch reads GKDENEKLWD…VKVLKVLTKL (432 aa). Disordered stretches follow at residues 34 to 110 and 148 to 192; these read NEKL…HSEG and SSLP…PATA. Over residues 38 to 51 the composition is skewed to acidic residues; the sequence is WDDEDEEEEEEEES. The span at 96 to 110 shows a compositional bias: basic and acidic residues; that stretch reads PDVKKEVYPESHSEG. Residues 167–185 are compositionally biased toward basic residues; the sequence is SRARNRTSGKVKRKNRSKS. ARM repeat units follow at residues 203-243, 245-284, 366-406, and 423-461; these read PYKI…NNAA, SFNQ…NLSV, PAMT…NIND, and SSLF…LTKL.

Belongs to the eutherian X-chromosome-specific Armcx family. As to quaternary structure, interacts with MIRO1.

It is found in the mitochondrion. The protein localises to the mitochondrion outer membrane. In terms of biological role, regulates mitochondrial transport during axon regeneration. Increases the proportion of motile mitochondria by recruiting stationary mitochondria into the motile pool. Enhances mitochondria movement and neurite growth in both adult axons and embryonic neurons. Promotes neuronal survival and axon regeneration after nerve injury. May link mitochondria to the Trak1-kinesin motor complex via its interaction with MIRO1. The protein is Armadillo repeat-containing X-linked protein 1 (Armcx1) of Rattus norvegicus (Rat).